A 659-amino-acid chain; its full sequence is Tyrosine-protein kinase BTK (659 aa).

Position 2 is an N-acetylalanine (A2). The PH domain occupies 3–133 (AVILESIFLK…WIHQLKNVIR (131 aa)). The tract at residues 12–24 (KRSQQKKKTSPLN) is inositol-(1,3,4,5)-tetrakisphosphate 1-binding. At S21 the chain carries Phosphoserine. 1D-myo-inositol 1,3,4,5-tetrakisphosphate contacts are provided by K26, R28, and Y39. Y40 bears the Phosphotyrosine mark. K53 serves as a coordination point for 1D-myo-inositol 1,3,4,5-tetrakisphosphate. A phosphoserine mark is found at S55 and S115. The segment at 135–171 (NSDLVQKYHPCFWIDGQYLCCSQTAKNAMGCQILENR) adopts a Btk-type zinc-finger fold. Residues H143, C154, C155, and C165 each coordinate Zn(2+). Residues 171 to 210 (RNGSLKPGSSHRKTKKPLPPTPEEDQILKKPLPPEPAAAP) form a disordered region. S180 is modified (phosphoserine; by PKC/PRKCB). Position 191 is a phosphothreonine (T191). The region spanning 214 to 274 (SELKKVVALY…PSNYVTEAED (61 aa)) is the SH3 domain. Phosphotyrosine; by autocatalysis is present on Y223. The region spanning 281–377 (WYSKHMTRSQ…GLISRLKYPV (97 aa)) is the SH2 domain. A phosphotyrosine mark is found at Y344 and Y361. The 254-residue stretch at 402 to 655 (LTFLKELGTG…ILLSNILDVM (254 aa)) folds into the Protein kinase domain. ATP contacts are provided by residues 408-416 (LGTGQFGVV) and K430. 474–477 (TEYM) serves as a coordination point for clofedanol. 474–477 (TEYM) lines the dasatinib pocket. The active-site Proton acceptor is the D521. L542 is a binding site for clofedanol. Y551 carries the phosphotyrosine; by LYN and SYK modification. Positions 581–588 (WAFGVLMW) match the CAV1-binding motif. S604 is subject to Phosphoserine. Y617 carries the phosphotyrosine modification. S623 and S659 each carry phosphoserine.

It belongs to the protein kinase superfamily. Tyr protein kinase family. TEC subfamily. Part of a complex composed of EEIG1, TNFRSF11A/RANK, PLCG2, GAB2, TEC and BTK; complex formation increases in the presence of TNFSF11/RANKL. Binds GTF2I through the PH domain. Interacts with SH3BP5 via the SH3 domain. Interacts with IBTK via its PH domain. Interacts with ARID3A, CAV1, FASLG, PIN1, TLR8 and TLR9. Interacts with MPL/TPOR. Zn(2+) is required as a cofactor. Post-translationally, following B-cell receptor (BCR) engagement, translocates to the plasma membrane where it gets phosphorylated at Tyr-551 by LYN and SYK. Phosphorylation at Tyr-551 is followed by autophosphorylation of Tyr-223 which may create a docking site for a SH2 containing protein. Phosphorylation at Ser-180 by PRKCB, leads in translocation of BTK back to the cytoplasmic fraction. Phosphorylation at Ser-21 and Ser-115 creates a binding site for PIN1 at these Ser-Pro motifs, and promotes it's recruitment. In terms of tissue distribution, predominantly expressed in B-lymphocytes.

Its subcellular location is the cytoplasm. The protein resides in the cell membrane. The protein localises to the nucleus. It is found in the membrane raft. It catalyses the reaction L-tyrosyl-[protein] + ATP = O-phospho-L-tyrosyl-[protein] + ADP + H(+). Activated by phosphorylation. In primary B lymphocytes, is almost always non-phosphorylated and is thus catalytically inactive. Stimulation of TLR8 and TLR9 causes BTK activation. As a negative feedback mechanism to fine-tune BCR signaling, activated PRKCB down-modulates BTK function via direct phosphorylation of BTK at Ser-180, resulting in translocation of BTK back to the cytoplasmic fraction. PIN1, SH3BP5, and IBTK were also identified as BTK activity inhibitors. Interaction with CAV1 leads to dramatic down-regulation of the kinase activity of BTK. LFM-13A is a specific inhibitor of BTK. Dasatinib, a cancer drug acting as a tyrosine kinase inhibitor, also blocks BTK activity. Its function is as follows. Non-receptor tyrosine kinase indispensable for B lymphocyte development, differentiation and signaling. Binding of antigen to the B-cell antigen receptor (BCR) triggers signaling that ultimately leads to B-cell activation. After BCR engagement and activation at the plasma membrane, phosphorylates PLCG2 at several sites, igniting the downstream signaling pathway through calcium mobilization, followed by activation of the protein kinase C (PKC) family members. PLCG2 phosphorylation is performed in close cooperation with the adapter protein B-cell linker protein BLNK. BTK acts as a platform to bring together a diverse array of signaling proteins and is implicated in cytokine receptor signaling pathways. Plays an important role in the function of immune cells of innate as well as adaptive immunity, as a component of the Toll-like receptors (TLR) pathway. The TLR pathway acts as a primary surveillance system for the detection of pathogens and are crucial to the activation of host defense. Especially, is a critical molecule in regulating TLR9 activation in splenic B-cells. Within the TLR pathway, induces tyrosine phosphorylation of TIRAP which leads to TIRAP degradation. BTK also plays a critical role in transcription regulation. Induces the activity of NF-kappa-B, which is involved in regulating the expression of hundreds of genes. BTK is involved on the signaling pathway linking TLR8 and TLR9 to NF-kappa-B. Acts as an activator of NLRP3 inflammasome assembly by mediating phosphorylation of NLRP3. Transiently phosphorylates transcription factor GTF2I on tyrosine residues in response to BCR. GTF2I then translocates to the nucleus to bind regulatory enhancer elements to modulate gene expression. ARID3A and NFAT are other transcriptional target of BTK. BTK is required for the formation of functional ARID3A DNA-binding complexes. There is however no evidence that BTK itself binds directly to DNA. BTK has a dual role in the regulation of apoptosis. Plays a role in STING1-mediated induction of type I interferon (IFN) response by phosphorylating DDX41. This is Tyrosine-protein kinase BTK (BTK) from Homo sapiens (Human).